The chain runs to 128 residues: Small ribosomal subunit protein uS9 (128 aa).

Residues 97 to 113 (RSEGFMTRDPRSVERKK) show a composition bias toward basic and acidic residues. Residues 97–128 (RSEGFMTRDPRSVERKKPGQPKARRRFQFSKR) form a disordered region. Basic residues predominate over residues 114-128 (PGQPKARRRFQFSKR).

It belongs to the universal ribosomal protein uS9 family.

This chain is Small ribosomal subunit protein uS9, found in Bacteroides fragilis (strain ATCC 25285 / DSM 2151 / CCUG 4856 / JCM 11019 / LMG 10263 / NCTC 9343 / Onslow / VPI 2553 / EN-2).